The sequence spans 550 residues: Glutamyl-tRNA(Gln) amidotransferase subunit A, mitochondrial (550 aa).

Active-site charge relay system residues include Lys-79 and Ser-171. Catalysis depends on Ser-195, which acts as the Acyl-ester intermediate. The tract at residues 371–390 (EKDENKVDNDNDDDDDVDEN) is disordered.

This sequence belongs to the amidase family. GatA subfamily. In terms of assembly, subunit of the heterotrimeric GatCAB amidotransferase (AdT) complex, composed of A, B and C subunits.

It is found in the mitochondrion. It catalyses the reaction L-glutamyl-tRNA(Gln) + L-glutamine + ATP + H2O = L-glutaminyl-tRNA(Gln) + L-glutamate + ADP + phosphate + H(+). Functionally, allows the formation of correctly charged Gln-tRNA(Gln) through the transamidation of misacylated Glu-tRNA(Gln) in the mitochondria. The reaction takes place in the presence of glutamine and ATP through an activated gamma-phospho-Glu-tRNA(Gln). This chain is Glutamyl-tRNA(Gln) amidotransferase subunit A, mitochondrial, found in Dictyostelium discoideum (Social amoeba).